Consider the following 270-residue polypeptide: tRNA pseudouridine synthase A (270 aa).

The Nucleophile role is filled by D51. Position 109 (Y109) interacts with substrate.

Belongs to the tRNA pseudouridine synthase TruA family. As to quaternary structure, homodimer.

The catalysed reaction is uridine(38/39/40) in tRNA = pseudouridine(38/39/40) in tRNA. Its function is as follows. Formation of pseudouridine at positions 38, 39 and 40 in the anticodon stem and loop of transfer RNAs. The chain is tRNA pseudouridine synthase A from Variovorax paradoxus (strain S110).